We begin with the raw amino-acid sequence, 520 residues long: NAD(P)H-quinone oxidoreductase subunit 2 (520 aa).

A run of 14 helical transmembrane segments spans residues 15–35, 42–62, 79–99, 106–126, 132–152, 167–187, 210–230, 244–264, 280–300, 306–326, 334–354, 378–398, 400–420, and 466–486; these read ILPEGIVIVTLMGVLIVDLIL, WIGYLAIAGLLAAIVALYFQW, LSIIFRGIIALSAVVTILMSI, GTALAEFIAILLTATLGGMFV, LVMIFISLETLSISSYLLTGY, LLIGASSTAVFLYGVSLLYGL, LGAVIALVFVIAGIGFKISAA, PTPVIAFLSVGSKAAGFALAI, FVFTALAVLSMILGNVVALAQ, MLAYSSIAQAGFVMIGLIAGT, IFYLLVYLFMNLCGFTCIILF, LGLSISLLSLGGIPPLAGFFG, IYLFWAGWQAGLYWLVLLGLV, and VGLVLTLIATSVAGILSNPLF.

This sequence belongs to the complex I subunit 2 family. As to quaternary structure, NDH-1 can be composed of about 15 different subunits; different subcomplexes with different compositions have been identified which probably have different functions.

The protein resides in the cellular thylakoid membrane. The catalysed reaction is a plastoquinone + NADH + (n+1) H(+)(in) = a plastoquinol + NAD(+) + n H(+)(out). It carries out the reaction a plastoquinone + NADPH + (n+1) H(+)(in) = a plastoquinol + NADP(+) + n H(+)(out). Functionally, NDH-1 shuttles electrons from an unknown electron donor, via FMN and iron-sulfur (Fe-S) centers, to quinones in the respiratory and/or the photosynthetic chain. The immediate electron acceptor for the enzyme in this species is believed to be plastoquinone. Couples the redox reaction to proton translocation, and thus conserves the redox energy in a proton gradient. Cyanobacterial NDH-1 also plays a role in inorganic carbon-concentration. This is NAD(P)H-quinone oxidoreductase subunit 2 from Nostoc sp. (strain PCC 7120 / SAG 25.82 / UTEX 2576).